The primary structure comprises 338 residues: D-erythrose-4-phosphate dehydrogenase (338 aa).

An NAD(+)-binding site is contributed by 11 to 12; sequence RI. Substrate is bound by residues 153-155, Arg-199, 212-213, and Arg-235; these read SCT and TK. The Nucleophile role is filled by Cys-154. Asn-317 provides a ligand contact to NAD(+).

Belongs to the glyceraldehyde-3-phosphate dehydrogenase family. Epd subfamily. Homotetramer.

The protein localises to the cytoplasm. It carries out the reaction D-erythrose 4-phosphate + NAD(+) + H2O = 4-phospho-D-erythronate + NADH + 2 H(+). Its pathway is cofactor biosynthesis; pyridoxine 5'-phosphate biosynthesis; pyridoxine 5'-phosphate from D-erythrose 4-phosphate: step 1/5. Its function is as follows. Catalyzes the NAD-dependent conversion of D-erythrose 4-phosphate to 4-phosphoerythronate. The chain is D-erythrose-4-phosphate dehydrogenase from Shewanella sp. (strain MR-4).